A 157-amino-acid chain; its full sequence is Transcriptional repressor NrdR (157 aa).

A zinc finger spans residues 3 to 34 (CPFCRHPDSRVVDSRTSDDGLSIRRRRQCPEC). One can recognise an ATP-cone domain in the interval 46-136 (LSVIKRNGVV…VYQGFDSLDD (91 aa)).

It belongs to the NrdR family. It depends on Zn(2+) as a cofactor.

Functionally, negatively regulates transcription of bacterial ribonucleotide reductase nrd genes and operons by binding to NrdR-boxes. The protein is Transcriptional repressor NrdR of Clavibacter sepedonicus (Clavibacter michiganensis subsp. sepedonicus).